The chain runs to 226 residues: Protein AF-9 homolog (226 aa).

Residues Arg-8 to Arg-169 enclose the YEATS domain. The stretch at Gln-187–Asn-224 forms a coiled coil.

Component of the SWR1 chromatin-remodeling complex composed of at least ACT1, ARP4, RVB1, RVB2, ARP6, YAF9, VPS71, VPS72, SWC3, SWC4, SWC5, SWC7 and SWR1, and perhaps BDF1. Component of the NuA4 histone acetyltransferase complex composed of at least ACT1, ARP4, YAF9, VID21, SWC4, EAF3, EAF5, EAF6, EAF7, EPL1, ESA1, TRA1 and YNG2. Interacts with SWC4.

It is found in the cytoplasm. It localises to the nucleus. Its function is as follows. Component of the SWR1 complex which mediates the ATP-dependent exchange of histone H2A for the H2A variant HZT1 leading to transcriptional regulation of selected genes by chromatin remodeling. Component of the NuA4 histone acetyltransferase complex which is involved in transcriptional activation of selected genes principally by acetylation of nucleosomal histones H4 and H2A. The NuA4 complex is also involved in DNA repair. Yaf9 may also be required for viability in conditions in which the structural integrity of the spindle is compromised. The chain is Protein AF-9 homolog (YAF9) from Saccharomyces cerevisiae (strain ATCC 204508 / S288c) (Baker's yeast).